Here is a 347-residue protein sequence, read N- to C-terminus: Transcription elongation factor A protein 3 (347 aa).

The region spanning 5-82 (EELLRIAKKL…KNWKRLLDSP (78 aa)) is the TFIIS N-terminal domain. A compositionally biased stretch (basic and acidic residues) spans 83-100 (RTTKGEREEREKAKKEKG). A disordered region spans residues 83 to 168 (RTTKGEREER…TTPSSPSTPT (86 aa)). Ser-113 is modified (phosphoserine). A compositionally biased stretch (basic and acidic residues) spans 119–131 (GGGEPKTRRDSVD). 2 stretches are compositionally biased toward low complexity: residues 132–142 (SRSSTTSSPKR) and 157–168 (TPTTPSSPSTPT). The residue at position 139 (Ser-139) is a Phosphoserine. Positions 186 to 302 (VRDKCVEMLS…EHQMAKTGGT (117 aa)) constitute a TFIIS central domain. The TFIIS-type zinc-finger motif lies at 305–345 (DLLRCSKCKKKNCTYNQVQTRSADEPMTTFVLCNECGNRWK). The Zn(2+) site is built by Cys-309, Cys-312, Cys-337, and Cys-340.

It belongs to the TFS-II family. In terms of tissue distribution, liver, kidney and heart.

It localises to the nucleus. Functionally, necessary for efficient RNA polymerase II transcription elongation past template-encoded arresting sites. The arresting sites in DNA have the property of trapping a certain fraction of elongating RNA polymerases that pass through, resulting in locked ternary complexes. Cleavage of the nascent transcript by S-II allows the resumption of elongation from the new 3'-terminus. This Mus musculus (Mouse) protein is Transcription elongation factor A protein 3 (Tcea3).